Here is a 66-residue protein sequence, read N- to C-terminus: Large ribosomal subunit protein bL33c (66 aa).

This sequence belongs to the bacterial ribosomal protein bL33 family.

It is found in the plastid. It localises to the chloroplast. The polypeptide is Large ribosomal subunit protein bL33c (Adiantum capillus-veneris (Maidenhair fern)).